The sequence spans 186 residues: Large ribosomal subunit protein bL9 (186 aa).

Residues 153–186 form a disordered region; sequence ELRQVKSQSQKSQQQEAKQNEVGEATDSDKADQK. Residues 157-169 are compositionally biased toward low complexity; sequence VKSQSQKSQQQEA.

Belongs to the bacterial ribosomal protein bL9 family.

Binds to the 23S rRNA. The polypeptide is Large ribosomal subunit protein bL9 (Wolbachia sp. subsp. Brugia malayi (strain TRS)).